Reading from the N-terminus, the 174-residue chain is UPF0340 protein SAR2202 (174 aa).

This sequence belongs to the UPF0340 family.

The protein is UPF0340 protein SAR2202 of Staphylococcus aureus (strain MRSA252).